The chain runs to 351 residues: Anthranilate phosphoribosyltransferase (351 aa).

5-phospho-alpha-D-ribose 1-diphosphate is bound by residues glycine 85, 88–89 (GD), serine 93, 95–98 (NIST), 113–121 (KHGNRAASS), and threonine 125. Position 85 (glycine 85) interacts with anthranilate. Position 97 (serine 97) interacts with Mg(2+). Asparagine 116 serves as a coordination point for anthranilate. Arginine 171 is an anthranilate binding site. Mg(2+) is bound by residues aspartate 229 and glutamate 230.

It belongs to the anthranilate phosphoribosyltransferase family. Homodimer. Mg(2+) is required as a cofactor.

It catalyses the reaction N-(5-phospho-beta-D-ribosyl)anthranilate + diphosphate = 5-phospho-alpha-D-ribose 1-diphosphate + anthranilate. It functions in the pathway amino-acid biosynthesis; L-tryptophan biosynthesis; L-tryptophan from chorismate: step 2/5. Catalyzes the transfer of the phosphoribosyl group of 5-phosphorylribose-1-pyrophosphate (PRPP) to anthranilate to yield N-(5'-phosphoribosyl)-anthranilate (PRA). The chain is Anthranilate phosphoribosyltransferase from Saccharopolyspora erythraea (strain ATCC 11635 / DSM 40517 / JCM 4748 / NBRC 13426 / NCIMB 8594 / NRRL 2338).